The primary structure comprises 139 residues: Putative pre-16S rRNA nuclease (139 aa).

This sequence belongs to the YqgF nuclease family.

It is found in the cytoplasm. Could be a nuclease involved in processing of the 5'-end of pre-16S rRNA. The sequence is that of Putative pre-16S rRNA nuclease from Pectobacterium carotovorum subsp. carotovorum (strain PC1).